The sequence spans 235 residues: 7-cyano-7-deazaguanine synthase (235 aa).

ATP is bound at residue 7 to 17 (CSGGLDSVSLA). Zn(2+) contacts are provided by C185, C193, C196, and C199.

Belongs to the QueC family. Zn(2+) serves as cofactor.

The enzyme catalyses 7-carboxy-7-deazaguanine + NH4(+) + ATP = 7-cyano-7-deazaguanine + ADP + phosphate + H2O + H(+). It functions in the pathway purine metabolism; 7-cyano-7-deazaguanine biosynthesis. Its function is as follows. Catalyzes the ATP-dependent conversion of 7-carboxy-7-deazaguanine (CDG) to 7-cyano-7-deazaguanine (preQ(0)). This is 7-cyano-7-deazaguanine synthase from Allorhizobium ampelinum (strain ATCC BAA-846 / DSM 112012 / S4) (Agrobacterium vitis (strain S4)).